The chain runs to 335 residues: Biotin synthase (335 aa).

The Radical SAM core domain occupies 43–269; that stretch reads YFGKKVKLNM…INPTKEIRIA (227 aa). [4Fe-4S] cluster is bound by residues cysteine 61, cysteine 65, and cysteine 68. [2Fe-2S] cluster contacts are provided by cysteine 104, cysteine 137, cysteine 197, and arginine 267.

The protein belongs to the radical SAM superfamily. Biotin synthase family. As to quaternary structure, homodimer. The cofactor is [4Fe-4S] cluster. [2Fe-2S] cluster is required as a cofactor.

It catalyses the reaction (4R,5S)-dethiobiotin + (sulfur carrier)-SH + 2 reduced [2Fe-2S]-[ferredoxin] + 2 S-adenosyl-L-methionine = (sulfur carrier)-H + biotin + 2 5'-deoxyadenosine + 2 L-methionine + 2 oxidized [2Fe-2S]-[ferredoxin]. Its pathway is cofactor biosynthesis; biotin biosynthesis; biotin from 7,8-diaminononanoate: step 2/2. Catalyzes the conversion of dethiobiotin (DTB) to biotin by the insertion of a sulfur atom into dethiobiotin via a radical-based mechanism. The sequence is that of Biotin synthase from Staphylococcus aureus (strain MRSA252).